A 423-amino-acid chain; its full sequence is Gamma-glutamyl phosphate reductase (423 aa).

The protein belongs to the gamma-glutamyl phosphate reductase family.

Its subcellular location is the cytoplasm. It catalyses the reaction L-glutamate 5-semialdehyde + phosphate + NADP(+) = L-glutamyl 5-phosphate + NADPH + H(+). It participates in amino-acid biosynthesis; L-proline biosynthesis; L-glutamate 5-semialdehyde from L-glutamate: step 2/2. Functionally, catalyzes the NADPH-dependent reduction of L-glutamate 5-phosphate into L-glutamate 5-semialdehyde and phosphate. The product spontaneously undergoes cyclization to form 1-pyrroline-5-carboxylate. The sequence is that of Gamma-glutamyl phosphate reductase from Paramagnetospirillum magneticum (strain ATCC 700264 / AMB-1) (Magnetospirillum magneticum).